Here is a 294-residue protein sequence, read N- to C-terminus: Cytidine deaminase (294 aa).

2 consecutive CMP/dCMP-type deaminase domains span residues 48-168 (NDDE…FGPK) and 187-294 (DNTS…RVTL). Residue 89 to 91 (NME) participates in substrate binding. Residue His102 participates in Zn(2+) binding. Glu104 acts as the Proton donor in catalysis. 2 residues coordinate Zn(2+): Cys129 and Cys132.

Belongs to the cytidine and deoxycytidylate deaminase family. In terms of assembly, homodimer. Requires Zn(2+) as cofactor.

The enzyme catalyses cytidine + H2O + H(+) = uridine + NH4(+). It carries out the reaction 2'-deoxycytidine + H2O + H(+) = 2'-deoxyuridine + NH4(+). In terms of biological role, this enzyme scavenges exogenous and endogenous cytidine and 2'-deoxycytidine for UMP synthesis. The sequence is that of Cytidine deaminase from Proteus mirabilis (strain HI4320).